A 155-amino-acid polypeptide reads, in one-letter code: 6,7-dimethyl-8-ribityllumazine synthase (155 aa).

Residues Phe-23, 57-59, and 81-83 contribute to the 5-amino-6-(D-ribitylamino)uracil site; these read AFE and AVI. Residue 86–87 coordinates (2S)-2-hydroxy-3-oxobutyl phosphate; that stretch reads ST. His-89 acts as the Proton donor in catalysis. Residue Phe-114 coordinates 5-amino-6-(D-ribitylamino)uracil. Arg-128 is a (2S)-2-hydroxy-3-oxobutyl phosphate binding site.

The protein belongs to the DMRL synthase family.

The catalysed reaction is (2S)-2-hydroxy-3-oxobutyl phosphate + 5-amino-6-(D-ribitylamino)uracil = 6,7-dimethyl-8-(1-D-ribityl)lumazine + phosphate + 2 H2O + H(+). The protein operates within cofactor biosynthesis; riboflavin biosynthesis; riboflavin from 2-hydroxy-3-oxobutyl phosphate and 5-amino-6-(D-ribitylamino)uracil: step 1/2. In terms of biological role, catalyzes the formation of 6,7-dimethyl-8-ribityllumazine by condensation of 5-amino-6-(D-ribitylamino)uracil with 3,4-dihydroxy-2-butanone 4-phosphate. This is the penultimate step in the biosynthesis of riboflavin. This Desulfatibacillum aliphaticivorans protein is 6,7-dimethyl-8-ribityllumazine synthase.